The following is a 155-amino-acid chain: Small ribosomal subunit protein uS7cz/uS7cy (155 aa).

It belongs to the universal ribosomal protein uS7 family. In terms of assembly, part of the 30S ribosomal subunit.

It is found in the plastid. It localises to the chloroplast. In terms of biological role, one of the primary rRNA binding proteins, it binds directly to 16S rRNA where it nucleates assembly of the head domain of the 30S subunit. The polypeptide is Small ribosomal subunit protein uS7cz/uS7cy (rps7-A) (Lemna minor (Common duckweed)).